Reading from the N-terminus, the 519-residue chain is GATA zinc finger domain-containing protein 8 (519 aa).

4 disordered regions span residues 25–182, 198–249, 273–359, and 431–453; these read YSTG…SSSG, SNIN…SNNT, SNNM…NNKQ, and DERQQKKRMESDKNAEKREKRRE. Low complexity predominate over residues 37 to 156; sequence TNNSQNKTNN…SSSITSPSSN (120 aa). Over residues 172–182 the composition is skewed to polar residues; that stretch reads SPNNKQVSSSG. The span at 273 to 357 shows a compositional bias: low complexity; sequence SNNMNINNQH…SNINNNNNNN (85 aa). The stretch at 429-461 forms a coiled coil; that stretch reads KTDERQQKKRMESDKNAEKREKRREASRLLNNV. The GATA-type zinc finger occupies 462–487; sequence CRNCKTTETPEWRKGPDGTKSLCNAC.

The polypeptide is GATA zinc finger domain-containing protein 8 (gtaH) (Dictyostelium discoideum (Social amoeba)).